A 473-amino-acid chain; its full sequence is Flavonol 3-O-glucosyltransferase UGT89B1 (473 aa).

Catalysis depends on His25, which acts as the Proton acceptor. His25 serves as a coordination point for an anthocyanidin. The active-site Charge relay is the Asp127. Positions 348, 350, 365, 368, 369, 370, and 373 each coordinate UDP-alpha-D-glucose. Ala388 lines the an anthocyanidin pocket. Asp389 and Gln390 together coordinate UDP-alpha-D-glucose.

It belongs to the UDP-glycosyltransferase family.

The catalysed reaction is a flavonol + UDP-alpha-D-glucose = a flavonol 3-O-beta-D-glucoside + UDP + H(+). The enzyme catalyses a 7-O-hydroxy-flavonol + UDP-alpha-D-glucose = a flavonol 7-O-beta-D-glucoside + UDP + H(+). Functionally, possesses quercetin 3-O-glucosyltransferase, 7-O-glucosyltransferase and 4'-O-glucosyltransferase activities in vitro. Also active in vitro on benzoates and benzoate derivatives. The polypeptide is Flavonol 3-O-glucosyltransferase UGT89B1 (Arabidopsis thaliana (Mouse-ear cress)).